The primary structure comprises 105 residues: Thioredoxin (105 aa).

The region spanning 2–105 (VKQIESKYAF…KLEATINELI (104 aa)) is the Thioredoxin domain. Lysine 3 carries the post-translational modification N6-acetyllysine. Position 8 is an N6-succinyllysine (lysine 8). Catalysis depends on nucleophile residues cysteine 32 and cysteine 35. A disulfide bond links cysteine 32 and cysteine 35. The residue at position 39 (lysine 39) is an N6-acetyllysine. Cysteine 62 and cysteine 69 each carry S-nitrosocysteine. Position 73 is an S-nitrosocysteine; alternate (cysteine 73). Lysine 94 carries the N6-acetyllysine; alternate modification. Lysine 94 bears the N6-succinyllysine; alternate mark.

The protein belongs to the thioredoxin family. Homodimer; disulfide-linked. Interacts with TXNIP through the redox-active site. Interacts with MAP3K5 and CASP3. Interacts with APEX1; the interaction stimulates the FOS/JUN AP-1 DNA-binding activity in a redox-dependent manner. In terms of processing, in the fully reduced protein, both Cys-69 and Cys-73 are nitrosylated in response to nitric oxide (NO). When two disulfide bonds are present in the protein, only Cys-73 is nitrosylated. Cys-73 can serve as donor for nitrosylation of target proteins.

The protein resides in the nucleus. Its subcellular location is the cytoplasm. The protein localises to the secreted. Functionally, participates in various redox reactions through the reversible oxidation of its active center dithiol to a disulfide and catalyzes dithiol-disulfide exchange reactions. Plays a role in the reversible S-nitrosylation of cysteine residues in target proteins, and thereby contributes to the response to intracellular nitric oxide. Nitrosylates the active site Cys of CASP3 in response to nitric oxide (NO), and thereby inhibits caspase-3 activity. Induces the FOS/JUN AP-1 DNA binding activity in ionizing radiation (IR) cells through its oxidation/reduction status and stimulates AP-1 transcriptional activity. The protein is Thioredoxin (TXN) of Bos taurus (Bovine).